Reading from the N-terminus, the 148-residue chain is MTLHKDRRIGRLSVLLLLHETEENQQISRLERDGWKVCLGRVGSMDAHKVVAAIETASKKSGVIQSEGYRESHALYHATMEALHGVTRGEMLLGSLLRTVGLKFAVLRGNPYESEAEGDWIAVSLYGTIGAPIKGLEHETFGVGINHI.

Belongs to the HutP family. As to quaternary structure, homohexamer.

Functionally, antiterminator that binds to cis-acting regulatory sequences on the mRNA in the presence of histidine, thereby suppressing transcription termination and activating the hut operon for histidine utilization. This is Hut operon positive regulatory protein from Bacillus velezensis (strain DSM 23117 / BGSC 10A6 / LMG 26770 / FZB42) (Bacillus amyloliquefaciens subsp. plantarum).